The primary structure comprises 225 residues: NAD(P)H-quinone oxidoreductase subunit K, chloroplastic (225 aa).

[4Fe-4S] cluster contacts are provided by Cys43, Cys44, Cys108, and Cys139.

It belongs to the complex I 20 kDa subunit family. As to quaternary structure, NDH is composed of at least 16 different subunits, 5 of which are encoded in the nucleus. It depends on [4Fe-4S] cluster as a cofactor.

It is found in the plastid. The protein resides in the chloroplast thylakoid membrane. The enzyme catalyses a plastoquinone + NADH + (n+1) H(+)(in) = a plastoquinol + NAD(+) + n H(+)(out). The catalysed reaction is a plastoquinone + NADPH + (n+1) H(+)(in) = a plastoquinol + NADP(+) + n H(+)(out). In terms of biological role, NDH shuttles electrons from NAD(P)H:plastoquinone, via FMN and iron-sulfur (Fe-S) centers, to quinones in the photosynthetic chain and possibly in a chloroplast respiratory chain. The immediate electron acceptor for the enzyme in this species is believed to be plastoquinone. Couples the redox reaction to proton translocation, and thus conserves the redox energy in a proton gradient. The protein is NAD(P)H-quinone oxidoreductase subunit K, chloroplastic of Carica papaya (Papaya).